Reading from the N-terminus, the 370-residue chain is Pantothenate kinase 3 (370 aa).

E138 serves as the catalytic Proton acceptor. Acetyl-CoA is bound by residues S192, S195, and R207.

Belongs to the type II pantothenate kinase family. In terms of assembly, homodimer.

The protein localises to the cytoplasm. It catalyses the reaction (R)-pantothenate + ATP = (R)-4'-phosphopantothenate + ADP + H(+). The protein operates within cofactor biosynthesis; coenzyme A biosynthesis; CoA from (R)-pantothenate: step 1/5. Its activity is regulated as follows. Subject to allosteric regulation, exists in two distinct conformational states, a catalytically incompetent (or open) conformation stabilized by the binding of acetyl(acyl)-CoA, and a catalytically competent (or closed) conformation stabilized by ATP-binding. Inhibited by acetyl-CoA and its thioesters which act as allosteric inhibitors and compete with the ATP-binding site. Functionally, catalyzes the phosphorylation of pantothenate to generate 4'-phosphopantothenate in the first and rate-determining step of coenzyme A (CoA) synthesis. This is Pantothenate kinase 3 (PANK3) from Bos taurus (Bovine).